The primary structure comprises 940 residues: Gamma-aminobutyric acid type B receptor subunit 2 (940 aa).

The N-terminal stretch at 1–40 is a signal peptide; sequence MASPPSSGQPRPPPPPPPPARLLLPLLLSLLLWLAPGAWG. Residues 41-482 lie on the Extracellular side of the membrane; that stretch reads WTRGAPRPPP…LRKISLPLYS (442 aa). A glycan (N-linked (GlcNAc...) asparagine) is linked at N89. 3 cysteine pairs are disulfide-bonded: C107–C134, C236–C265, and C264–C301. N297, N388, N403, and N452 each carry an N-linked (GlcNAc...) asparagine glycan. The helical transmembrane segment at 483–503 threads the bilayer; the sequence is ILSALTILGMIMASAFLFFNI. The Cytoplasmic portion of the chain corresponds to 504 to 521; the sequence is KNRNQKLIKMSSPYMNNL. The helical transmembrane segment at 522–542 threads the bilayer; sequence IILGGMLSYASIFLFGLDGSF. The Extracellular segment spans residues 543-550; the sequence is VSEKTFET. The helical transmembrane segment at 551 to 571 threads the bilayer; the sequence is LCTVRTWILTVGYTTAFGAMF. Topologically, residues 572–596 are cytoplasmic; that stretch reads AKTWRVHAIFKNVKMKKKIIKDQKL. A helical transmembrane segment spans residues 597-617; the sequence is LVIVGGMLLIDLCILICWQAV. Over 618–653 the chain is Extracellular; the sequence is DPLRRTVERYSMEPDPAGRDISIRPLLEHCENTHMT. The chain crosses the membrane as a helical span at residues 654 to 674; it reads IWLGIVYAYKGLLMLFGCFLA. Residues 675–690 are Cytoplasmic-facing; it reads WETRNVSIPALNDSKY. A helical transmembrane segment spans residues 691–711; it reads IGMSVYNVGIMCIIGAAVSFL. At 712–719 the chain is on the extracellular side; sequence TRDQPNVQ. A helical membrane pass occupies residues 720–740; sequence FCIVALVIIFCSTITLCLVFV. The Cytoplasmic portion of the chain corresponds to 741–940; the sequence is PKLITLRTNP…PSFRVMVSGL (200 aa). The segment at 762 to 789 is disordered; sequence TQNQKKEDSKTSTSVTSVNQASTSRLEG. The segment covering 772-786 has biased composition (polar residues); it reads TSTSVTSVNQASTSR. A phosphoserine mark is found at S775 and S778. Residues 780–818 are a coiled coil; it reads NQASTSRLEGLQSENHRLRMKITELDKDLEEVTMQLQDT. T818 carries the post-translational modification Phosphothreonine. 6 positions are modified to phosphoserine: S883, S892, S912, S915, S919, and S923.

This sequence belongs to the G-protein coupled receptor 3 family. GABA-B receptor subfamily. In terms of assembly, heterodimer of GABBR1 and GABBR2. Homodimers may form, but are inactive. Interacts (via C-terminus) with ATF4 (via leucine zipper domain). Interacts with KCTD8, KCTD12 and KCTD16; this interaction determines the pharmacology and kinetics of the receptor response, the KCTD proteins markedly accelerating the GABA-B response, although to different extents. Highly expressed in areas of the brain including thalamic nuclei, the hippocampus, cerebellar Purkinje cells and the medial habenula, and moderately expressed in the cerebral cortex, certain anterioventral thalamic nuclei, dorsal medial hypothalamic nucleus and suprachiasmatic nuclei. Also weakly expressed in the testis.

It localises to the cell membrane. Its subcellular location is the postsynaptic cell membrane. The protein localises to the perikaryon. The protein resides in the cell projection. It is found in the dendrite. Functionally, component of a heterodimeric G-protein coupled receptor for GABA, formed by GABBR1 and GABBR2. Within the heterodimeric GABA receptor, only GABBR1 seems to bind agonists, while GABBR2 mediates coupling to G proteins. Ligand binding causes a conformation change that triggers signaling via guanine nucleotide-binding proteins (G proteins) and modulates the activity of down-stream effectors, such as adenylate cyclase. Signaling inhibits adenylate cyclase, stimulates phospholipase A2, activates potassium channels, inactivates voltage-dependent calcium-channels and modulates inositol phospholipid hydrolysis. Plays a critical role in the fine-tuning of inhibitory synaptic transmission. Pre-synaptic GABA receptor inhibits neurotransmitter release by down-regulating high-voltage activated calcium channels, whereas postsynaptic GABA receptor decreases neuronal excitability by activating a prominent inwardly rectifying potassium (Kir) conductance that underlies the late inhibitory postsynaptic potentials. Not only implicated in synaptic inhibition but also in hippocampal long-term potentiation, slow wave sleep, muscle relaxation and antinociception. The sequence is that of Gamma-aminobutyric acid type B receptor subunit 2 (Gabbr2) from Rattus norvegicus (Rat).